The chain runs to 142 residues: Large ribosomal subunit protein uL13 (142 aa).

This sequence belongs to the universal ribosomal protein uL13 family. Part of the 50S ribosomal subunit.

This protein is one of the early assembly proteins of the 50S ribosomal subunit, although it is not seen to bind rRNA by itself. It is important during the early stages of 50S assembly. This chain is Large ribosomal subunit protein uL13, found in Thioalkalivibrio sulfidiphilus (strain HL-EbGR7).